The following is a 464-amino-acid chain: Na(+)/H(+) antiporter NhaA 2 (464 aa).

Transmembrane regions (helical) follow at residues 53 to 73, 96 to 116, 134 to 154, 165 to 185, 195 to 215, 219 to 239, 257 to 277, 313 to 333, 340 to 360, 378 to 398, and 412 to 432; these read VGGIILLVAAAAALIWANSPW, LTLGAWAADGLLAIFFLVVGL, ALPIAAAVGGMVVPALIFVLV, GWAIPTATDIAFAVAVLAVIS, FLLTLAVVDDLLAITVIAVFY, IKAWALALAVVPLALFTVCAQ, VLVHESGVHATVAGVLLGFAV, IAIPVFAFFAAGVSIGGLSGL, PITLGIVLGLVAGKPIGILVT, WVDVLGMSMLAGIGFTVSLLI, and FVKIGVLSGSLLAASLAAIVL.

The protein belongs to the NhaA Na(+)/H(+) (TC 2.A.33) antiporter family.

The protein localises to the cell membrane. The enzyme catalyses Na(+)(in) + 2 H(+)(out) = Na(+)(out) + 2 H(+)(in). Its function is as follows. Na(+)/H(+) antiporter that extrudes sodium in exchange for external protons. This Mycolicibacterium vanbaalenii (strain DSM 7251 / JCM 13017 / BCRC 16820 / KCTC 9966 / NRRL B-24157 / PYR-1) (Mycobacterium vanbaalenii) protein is Na(+)/H(+) antiporter NhaA 2.